A 475-amino-acid chain; its full sequence is uncharacterized protein (475 aa).

Residues Ile19–Ile39 form a helical membrane-spanning segment. Disordered regions lie at residues Gly55 to Ser79 and Ser330 to Gly350. A compositionally biased stretch (polar residues) spans Leu60–Ser79. Basic residues predominate over residues Asn336–His348. Position 348 (His348) interacts with Zn(2+).

This sequence in the central section; belongs to the OapA family. The protein in the C-terminal section; belongs to the peptidase M23B family. Zn(2+) serves as cofactor.

Its subcellular location is the cell membrane. This is an uncharacterized protein from Haemophilus influenzae (strain ATCC 51907 / DSM 11121 / KW20 / Rd).